The sequence spans 484 residues: Coronin-1B (484 aa).

Ser-2 is modified (phosphoserine). WD repeat units follow at residues 80–120, 130–170, 174–213, 217–260, and 265–305; these read GHTG…LTSP, GHTK…ELYR, LHPD…LVAE, AHEG…EPMA, and DSSN…PYIH. Positions 447–481 form a coiled coil; the sequence is KLEEVMHGLRALRVLVKEQGERISRLEEHLGRMEN.

Belongs to the WD repeat coronin family. In terms of assembly, forms homooligomers, but does not form complexes with the other coronins. Interacts with Arp2/3 complex components, including ACTR2, ARPC1B and ARPC2. Binds actin. In terms of processing, phosphorylation on Ser-2 regulates the interaction with the Arp2/3 complex and cell motility in fibroblasts. Phosphorylation does not seem to affect subcellular location.

It localises to the cytoplasm. It is found in the cytoskeleton. The protein localises to the stress fiber. Functionally, regulates leading edge dynamics and cell motility in fibroblasts. May be involved in cytokinesis and signal transduction. This is Coronin-1B (Coro1b) from Rattus norvegicus (Rat).